The following is a 114-amino-acid chain: Histone H3-6 (114 aa).

Residues 1–17 are compositionally biased toward basic residues; sequence NTGGKAPRKHIAHKQAK. A disordered region spans residues 1–32; that stretch reads NTGGKAPRKHIAHKQAKKSSAAAATGGVKKPH. The segment covering 18–28 has biased composition (low complexity); the sequence is KSSAAAATGGV.

This sequence belongs to the histone H3 family. The nucleosome is a histone octamer containing two molecules each of H2A, H2B, H3 and H4 assembled in one H3-H4 heterotetramer and two H2A-H2B heterodimers. The octamer wraps approximately 147 bp of DNA.

It localises to the nucleus. Its subcellular location is the chromosome. In terms of biological role, core component of nucleosome. Nucleosomes wrap and compact DNA into chromatin, limiting DNA accessibility to the cellular machineries which require DNA as a template. Histones thereby play a central role in transcription regulation, DNA repair, DNA replication and chromosomal stability. DNA accessibility is regulated via a complex set of post-translational modifications of histones, also called histone code, and nucleosome remodeling. The polypeptide is Histone H3-6 (H3-6) (Stylonychia lemnae (Ciliate)).